The following is a 448-amino-acid chain: Asparagine--tRNA ligase (448 aa).

It belongs to the class-II aminoacyl-tRNA synthetase family. In terms of assembly, homodimer.

The protein resides in the cytoplasm. The catalysed reaction is tRNA(Asn) + L-asparagine + ATP = L-asparaginyl-tRNA(Asn) + AMP + diphosphate + H(+). The sequence is that of Asparagine--tRNA ligase from Streptococcus pyogenes serotype M12 (strain MGAS9429).